The following is a 317-amino-acid chain: Ribosomal protein L11 methyltransferase (317 aa).

Residues threonine 162, glycine 183, aspartate 205, and asparagine 248 each coordinate S-adenosyl-L-methionine.

Belongs to the methyltransferase superfamily. PrmA family.

Its subcellular location is the cytoplasm. The enzyme catalyses L-lysyl-[protein] + 3 S-adenosyl-L-methionine = N(6),N(6),N(6)-trimethyl-L-lysyl-[protein] + 3 S-adenosyl-L-homocysteine + 3 H(+). In terms of biological role, methylates ribosomal protein L11. This is Ribosomal protein L11 methyltransferase from Alkaliphilus metalliredigens (strain QYMF).